We begin with the raw amino-acid sequence, 218 residues long: Cytidylate kinase (218 aa).

ATP is bound at residue 11–19 (GPGASGKGT).

The protein belongs to the cytidylate kinase family. Type 1 subfamily.

Its subcellular location is the cytoplasm. It catalyses the reaction CMP + ATP = CDP + ADP. It carries out the reaction dCMP + ATP = dCDP + ADP. This is Cytidylate kinase from Neisseria meningitidis serogroup B (strain ATCC BAA-335 / MC58).